The chain runs to 439 residues: Ribosomal protein uS12 methylthiotransferase RimO (439 aa).

Positions 5–115 (PRISFTSLGC…VLDAVHRALP (111 aa)) constitute an MTTase N-terminal domain. 6 residues coordinate [4Fe-4S] cluster: C14, C50, C79, C146, C150, and C153. The Radical SAM core domain occupies 132-369 (LTPRHYAYLK…MARQQKISAR (238 aa)). In terms of domain architecture, TRAM spans 372–438 (KRKVGTRQQI…QYDLHGSVAG (67 aa)).

It belongs to the methylthiotransferase family. RimO subfamily. It depends on [4Fe-4S] cluster as a cofactor.

Its subcellular location is the cytoplasm. It catalyses the reaction L-aspartate(89)-[ribosomal protein uS12]-hydrogen + (sulfur carrier)-SH + AH2 + 2 S-adenosyl-L-methionine = 3-methylsulfanyl-L-aspartate(89)-[ribosomal protein uS12]-hydrogen + (sulfur carrier)-H + 5'-deoxyadenosine + L-methionine + A + S-adenosyl-L-homocysteine + 2 H(+). Catalyzes the methylthiolation of an aspartic acid residue of ribosomal protein uS12. The polypeptide is Ribosomal protein uS12 methylthiotransferase RimO (Bradyrhizobium diazoefficiens (strain JCM 10833 / BCRC 13528 / IAM 13628 / NBRC 14792 / USDA 110)).